Consider the following 111-residue polypeptide: Beta-microseminoprotein (111 aa).

The signal sequence occupies residues 1 to 20 (MKFLLGTLVVLATFVTLCNS). Q21 bears the Pyrrolidone carboxylic acid mark. 5 cysteine pairs are disulfide-bonded: C22-C67, C35-C59, C54-C90, C57-C66, and C81-C104.

It belongs to the beta-microseminoprotein family. As to quaternary structure, homodimer; Interacts with PI16. In terms of tissue distribution, corpora lutea, mostly in the luteal cells surrounding blood vessels.

The protein localises to the secreted. The sequence is that of Beta-microseminoprotein (MSMB) from Sus scrofa (Pig).